The following is a 116-amino-acid chain: MAYTITSQCISCKLCSSVCPTGAIKVAEDGQHWIDQALCTNCVDSVHTVPQCKAGCPTCDGCVKVPSDYWEGWFANYNRVIAKLTKKQDYWERWFNCYSQKFSEQIQKHQGEILGV.

Positions 2–29 (AYTITSQCISCKLCSSVCPTGAIKVAED) constitute a 4Fe-4S ferredoxin-type domain. The iron-sulfur cluster site is built by Cys-9, Cys-12, Cys-15, and Cys-19.

The chain is Ferredoxin-like protein in nif region (fdxN) from Trichormus azollae (Anabaena azollae).